A 1213-amino-acid chain; its full sequence is Protein jagged-1b (1213 aa).

The signal sequence occupies residues Met-1 to Ser-26. Residues Asp-27–Tyr-1064 lie on the Extracellular side of the membrane. Asn-139 carries N-linked (GlcNAc...) asparagine glycosylation. In terms of domain architecture, DSL spans Val-182 to Cys-226. Intrachain disulfides connect Cys-184–Cys-193 and Cys-197–Cys-209. The N-linked (GlcNAc...) asparagine glycan is linked to Asn-214. Intrachain disulfides connect Cys-217-Cys-226, Cys-231-Cys-242, Cys-235-Cys-248, Cys-250-Cys-259, Cys-262-Cys-273, Cys-268-Cys-279, Cys-281-Cys-290, Cys-297-Cys-309, Cys-303-Cys-319, Cys-321-Cys-330, Cys-337-Cys-348, Cys-342-Cys-357, Cys-359-Cys-368, Cys-375-Cys-386, Cys-380-Cys-395, Cys-397-Cys-406, Cys-413-Cys-424, Cys-418-Cys-433, Cys-435-Cys-444, Cys-451-Cys-461, Cys-455-Cys-470, Cys-472-Cys-481, Cys-488-Cys-499, Cys-493-Cys-508, Cys-510-Cys-519, Cys-526-Cys-537, Cys-531-Cys-546, Cys-548-Cys-557, Cys-596-Cys-612, Cys-614-Cys-623, Cys-630-Cys-641, Cys-635-Cys-650, Cys-652-Cys-661, Cys-668-Cys-679, Cys-673-Cys-688, Cys-690-Cys-699, Cys-706-Cys-717, Cys-711-Cys-726, and Cys-728-Cys-737. The region spanning Asn-227 to Asp-260 is the EGF-like 1 domain. Residues Lys-261–Asp-291 enclose the EGF-like 2; atypical domain. EGF-like domains follow at residues Asp-293–Glu-331 and Ala-333–Glu-369. The EGF-like 5; calcium-binding domain maps to Asn-371 to Gln-407. The EGF-like 6; calcium-binding domain occupies Asp-409–Asp-445. The region spanning Asn-447 to Glu-482 is the EGF-like 7; calcium-binding domain. Residues Asp-484–Gln-520 form the EGF-like 8; calcium-binding domain. 2 consecutive EGF-like domains span residues Asp-522–Ser-558 and Ser-592–His-624. A glycan (N-linked (GlcNAc...) asparagine) is linked at Asn-556. Residues Asn-626–Glu-662 form the EGF-like 11; calcium-binding domain. Residues Asn-664 to His-700 form the EGF-like 12; calcium-binding domain. Residues Arg-702 to Asn-738 enclose the EGF-like 13 domain. An N-linked (GlcNAc...) asparagine glycan is attached at Asn-742. 9 cysteine pairs are disulfide-bonded: Cys-745–Cys-756, Cys-750–Cys-765, Cys-767–Cys-776, Cys-783–Cys-794, Cys-788–Cys-803, Cys-805–Cys-814, Cys-821–Cys-832, Cys-826–Cys-841, and Cys-843–Cys-852. Residues Leu-746–Thr-777 form the EGF-like 14 domain. Residues Asn-779–Arg-815 enclose the EGF-like 15; calcium-binding domain. Residues Asn-817–Gln-853 enclose the EGF-like 16; calcium-binding domain. A VWFC domain is found at Cys-860 to Cys-914. An EGF-like 17 domain is found at Lys-918–Ala-956. Asn-957, Asn-988, and Asn-1042 each carry an N-linked (GlcNAc...) asparagine glycan. A helical transmembrane segment spans residues Leu-1065 to Trp-1087. Residues Cys-1088–Val-1213 are Cytoplasmic-facing. The disordered stretch occupies residues Glu-1181–Thr-1202.

The protein resides in the membrane. Its subcellular location is the cell membrane. Ligand for Notch receptors and involved in the mediation of Notch signaling. Seems to be involved in cell-fate decisions. The chain is Protein jagged-1b (jag1b) from Danio rerio (Zebrafish).